A 336-amino-acid polypeptide reads, in one-letter code: MMKIKITKSTILLIISFLFILAIMAYIGLDKIIKVLINTNPEYVILAFILQILVSVILSARWKFIIKILGYSANFKNIFLLVLMGLFINNITPSMRGGGEAFRAYYLSKLEEIPKGLAFSTVVVERVLDTAIFLFFTLFVIGYFVVTGFKYLEYLILSWIFLFSLTAIIIYLIANKGLLIKTVTKISKFICKYCSYNYDETKILQSIEEFYNSMKFFKNKRGWEVVVAIFLSVMRYIFDILKLWLLFLSLSYVVSVICVSAVYLITLLSGVLSITPSGFGTADTVMILSFSAFNIPPSVAAAVTLLDRLVSYILPTILGYIAMLIIKREIDKKKGK.

A run of 9 helical transmembrane segments spans residues 9 to 29 (STIL…YIGL), 40 to 60 (NPEY…ILSA), 68 to 88 (ILGY…GLFI), 127 to 147 (VLDT…FVVT), 154 to 174 (YLIL…YLIA), 223 to 243 (WEVV…ILKL), 245 to 265 (LLFL…VYLI), 285 to 305 (VMIL…AVTL), and 306 to 326 (LDRL…MLII).

Belongs to the UPF0104 family.

The protein resides in the cell membrane. This chain is UPF0104 membrane protein MJ1595, found in Methanocaldococcus jannaschii (strain ATCC 43067 / DSM 2661 / JAL-1 / JCM 10045 / NBRC 100440) (Methanococcus jannaschii).